The sequence spans 106 residues: Large ribosomal subunit protein uL24 (106 aa).

Residues 69-106 (SNLNPVDPKTGKATRVGRKVSSEGTLVRYSKKSGEEIK) form a disordered region.

This sequence belongs to the universal ribosomal protein uL24 family. In terms of assembly, part of the 50S ribosomal subunit.

Functionally, one of two assembly initiator proteins, it binds directly to the 5'-end of the 23S rRNA, where it nucleates assembly of the 50S subunit. One of the proteins that surrounds the polypeptide exit tunnel on the outside of the subunit. The sequence is that of Large ribosomal subunit protein uL24 from Bacteroides fragilis (strain ATCC 25285 / DSM 2151 / CCUG 4856 / JCM 11019 / LMG 10263 / NCTC 9343 / Onslow / VPI 2553 / EN-2).